We begin with the raw amino-acid sequence, 817 residues long: Putative receptor protein kinase ZmPK1 (817 aa).

The signal sequence occupies residues 1-28 (MPRPLAALLSTACILSFFIALFPRAASS). A Bulb-type lectin domain is found at 29–158 (RDILPLGSSL…GGNTVWQSFD (130 aa)). Residues 29–472 (RDILPLGSSL…HKTGGGESKW (444 aa)) are Extracellular-facing. N-linked (GlcNAc...) asparagine glycans are attached at residues N83, N128, N228, and N279. One can recognise an EGF-like domain in the interval 292–328 (MTQPCNIHGLCGPNGICHYSPTPTCSCPPGYATRNPG). 2 disulfides stabilise this stretch: C296/C308 and C302/C316. 2 N-linked (GlcNAc...) asparagine glycosylation sites follow: N329 and N339. In terms of domain architecture, PAN spans 342-424 (CDRYDKRSMR…VRTIYLKLPT (83 aa)). Intrachain disulfides connect C376–C398 and C384–C386. A glycan (N-linked (GlcNAc...) asparagine) is linked at N452. Residues 473–498 (FYFYGFIAAFFVVEVSFISFAWFFVL) traverse the membrane as a helical segment. Residues 499-817 (KRELRPSELW…AVQTLLSADD (319 aa)) are Cytoplasmic-facing. The Protein kinase domain occupies 534–817 (RKFKVELGRG…AVQTLLSADD (284 aa)). Residues 540-548 (LGRGESGTV) and K562 each bind ATP. The Proton acceptor role is filled by D658.

It belongs to the protein kinase superfamily. Ser/Thr protein kinase family. In terms of tissue distribution, expressed predominantly in the shoots and roots of young maize seedlings, and to a lesser extent in the silks.

The protein resides in the membrane. The catalysed reaction is L-seryl-[protein] + ATP = O-phospho-L-seryl-[protein] + ADP + H(+). It catalyses the reaction L-threonyl-[protein] + ATP = O-phospho-L-threonyl-[protein] + ADP + H(+). Probable receptor. Interaction with a ligand in the extracellular domain triggers the protein kinase activity of the cytoplasmic domain. The protein is Putative receptor protein kinase ZmPK1 (PK1) of Zea mays (Maize).